The following is a 472-amino-acid chain: Probable dipeptidase A (472 aa).

Cys-10 is an active-site residue.

It belongs to the peptidase C69 family.

The enzyme catalyses an L-aminoacyl-L-amino acid + H2O = 2 an L-alpha-amino acid. The protein is Probable dipeptidase A (pepDA) of Streptococcus pyogenes serotype M18 (strain MGAS8232).